A 294-amino-acid chain; its full sequence is Ribosomal RNA small subunit methyltransferase I (294 aa).

It belongs to the methyltransferase superfamily. RsmI family.

The protein localises to the cytoplasm. It carries out the reaction cytidine(1402) in 16S rRNA + S-adenosyl-L-methionine = 2'-O-methylcytidine(1402) in 16S rRNA + S-adenosyl-L-homocysteine + H(+). Catalyzes the 2'-O-methylation of the ribose of cytidine 1402 (C1402) in 16S rRNA. The chain is Ribosomal RNA small subunit methyltransferase I from Mesorhizobium japonicum (strain LMG 29417 / CECT 9101 / MAFF 303099) (Mesorhizobium loti (strain MAFF 303099)).